The chain runs to 496 residues: Probable cytosol aminopeptidase (496 aa).

Mn(2+) is bound by residues Lys252 and Asp257. The active site involves Lys264. Residues Asp275, Asp334, and Glu336 each contribute to the Mn(2+) site. Arg338 is a catalytic residue.

This sequence belongs to the peptidase M17 family. Mn(2+) is required as a cofactor.

Its subcellular location is the cytoplasm. The catalysed reaction is Release of an N-terminal amino acid, Xaa-|-Yaa-, in which Xaa is preferably Leu, but may be other amino acids including Pro although not Arg or Lys, and Yaa may be Pro. Amino acid amides and methyl esters are also readily hydrolyzed, but rates on arylamides are exceedingly low.. It carries out the reaction Release of an N-terminal amino acid, preferentially leucine, but not glutamic or aspartic acids.. In terms of biological role, presumably involved in the processing and regular turnover of intracellular proteins. Catalyzes the removal of unsubstituted N-terminal amino acids from various peptides. This chain is Probable cytosol aminopeptidase, found in Leifsonia xyli subsp. xyli (strain CTCB07).